Reading from the N-terminus, the 234-residue chain is UPF0173 metal-dependent hydrolase RHECIAT_CH0001941 (234 aa).

This sequence belongs to the UPF0173 family.

The sequence is that of UPF0173 metal-dependent hydrolase RHECIAT_CH0001941 from Rhizobium etli (strain CIAT 652).